A 172-amino-acid chain; its full sequence is Ribosome maturation factor RimM (172 aa).

In terms of domain architecture, PRC barrel spans 92 to 167 (ENEFYHSDLV…VILKLPEIIG (76 aa)).

This sequence belongs to the RimM family. As to quaternary structure, binds ribosomal protein uS19.

It localises to the cytoplasm. Its function is as follows. An accessory protein needed during the final step in the assembly of 30S ribosomal subunit, possibly for assembly of the head region. Essential for efficient processing of 16S rRNA. May be needed both before and after RbfA during the maturation of 16S rRNA. It has affinity for free ribosomal 30S subunits but not for 70S ribosomes. The polypeptide is Ribosome maturation factor RimM (Ehrlichia ruminantium (strain Gardel)).